Here is a 517-residue protein sequence, read N- to C-terminus: Meiosis-specific transcription factor mei4 (517 aa).

The fork-head DNA-binding region spans 81-172; sequence KPPCSYATLI…QNFVSVRLHR (92 aa). The disordered stretch occupies residues 170-278; that stretch reads LHRSHSTDSN…PNAETQEDLP (109 aa). Positions 209 to 223 are enriched in low complexity; it reads NSFNSSTSTSGSSSN. A compositionally biased stretch (polar residues) spans 230–246; the sequence is NDASQPSNQDSSLNSNI. Low complexity predominate over residues 254-270; that stretch reads SNVQSNSSSSENVPKPN.

It is found in the nucleus. Functionally, functions as a meiosis-specific transcription factor. Binds to the 5'-GTAAAYA-3' consensus sequence of the promoter of the spo6 gene. The polypeptide is Meiosis-specific transcription factor mei4 (mei4) (Schizosaccharomyces pombe (strain 972 / ATCC 24843) (Fission yeast)).